The chain runs to 103 residues: Small ribosomal subunit protein uS10 (103 aa).

This sequence belongs to the universal ribosomal protein uS10 family. In terms of assembly, part of the 30S ribosomal subunit.

Its function is as follows. Involved in the binding of tRNA to the ribosomes. This chain is Small ribosomal subunit protein uS10, found in Korarchaeum cryptofilum (strain OPF8).